Here is a 338-residue protein sequence, read N- to C-terminus: Flap endonuclease 1 (338 aa).

Positions 1-98 are N-domain; the sequence is MGVNLSSILI…ETLRERSLIK (98 aa). Asp27, Asp80, Glu152, Glu154, Asp173, Asp175, and Asp236 together coordinate Mg(2+). The I-domain stretch occupies residues 116–257; that stretch reads KIRSLSSRIN…TALSLIKKYN (142 aa). An interaction with PCNA region spans residues 330-338; it reads HQSSLDRFF.

Belongs to the XPG/RAD2 endonuclease family. FEN1 subfamily. In terms of assembly, interacts with PCNA. PCNA stimulates the nuclease activity without altering cleavage specificity. Mg(2+) serves as cofactor.

In terms of biological role, structure-specific nuclease with 5'-flap endonuclease and 5'-3' exonuclease activities involved in DNA replication and repair. During DNA replication, cleaves the 5'-overhanging flap structure that is generated by displacement synthesis when DNA polymerase encounters the 5'-end of a downstream Okazaki fragment. Binds the unpaired 3'-DNA end and kinks the DNA to facilitate 5' cleavage specificity. Cleaves one nucleotide into the double-stranded DNA from the junction in flap DNA, leaving a nick for ligation. Also involved in the base excision repair (BER) pathway. Acts as a genome stabilization factor that prevents flaps from equilibrating into structures that lead to duplications and deletions. Also possesses 5'-3' exonuclease activity on nicked or gapped double-stranded DNA. This chain is Flap endonuclease 1, found in Picrophilus torridus (strain ATCC 700027 / DSM 9790 / JCM 10055 / NBRC 100828 / KAW 2/3).